The sequence spans 122 residues: Small ribosomal subunit protein uS13 (122 aa).

Residues 97-122 form a disordered region; sequence PVRGQRTHTNARTRKGPAKAIAGKKK.

This sequence belongs to the universal ribosomal protein uS13 family. In terms of assembly, part of the 30S ribosomal subunit. Forms a loose heterodimer with protein S19. Forms two bridges to the 50S subunit in the 70S ribosome.

Functionally, located at the top of the head of the 30S subunit, it contacts several helices of the 16S rRNA. In the 70S ribosome it contacts the 23S rRNA (bridge B1a) and protein L5 of the 50S subunit (bridge B1b), connecting the 2 subunits; these bridges are implicated in subunit movement. Contacts the tRNAs in the A and P-sites. This is Small ribosomal subunit protein uS13 from Brucella abortus (strain S19).